The chain runs to 336 residues: Potassium channel subfamily K member 1 (336 aa).

Residues 1-20 lie on the Cytoplasmic side of the membrane; sequence MLQSLAGSSCVRLVERHRSA. A helical transmembrane segment spans residues 21-41; that stretch reads RCFGFLVLGYLLYLVFGAVVF. The Extracellular portion of the chain corresponds to 42 to 103; it reads SSVELPYEDL…SNASGNWNWD (62 aa). Asn95 carries an N-linked (GlcNAc...) asparagine glycan. Residues 104–116 constitute an intramembrane region (helical); that stretch reads FTSALFFASTVLS. The stretch at 117 to 122 is an intramembrane region; that stretch reads TTGYGH. The segment at 117–122 is selectivity filter 1; the sequence is TTGYGH. The Extracellular segment spans residues 123 to 132; sequence TVPLSDGGKA. A helical transmembrane segment spans residues 133–156; that stretch reads FCIIYSVIGIPFTLLFLTAVVQRI. Over 157 to 181 the chain is Cytoplasmic; sequence TVHVTRRPVLYFHIRWGFSKQVVAI. The helical transmembrane segment at 182 to 202 threads the bilayer; the sequence is VHAVLLGFVTVSCFFFIPAAV. The Extracellular segment spans residues 203-211; it reads FSVLEDDWN. Residues 212 to 224 constitute an intramembrane region (helical); it reads FLESFYFCFISLS. Residues 225 to 230 are selectivity filter 2; the sequence is TIGLGD. An intramembrane segment occupies 225 to 231; sequence TIGLGDY. Topologically, residues 232–243 are extracellular; sequence VPGEGYNQKFRE. A helical transmembrane segment spans residues 244–267; that stretch reads LYKIGITCYLLLGLIAMLVVLETF. Residues 268–336 lie on the Cytoplasmic side of the membrane; the sequence is CELHELKKFR…SACMDGPANH (69 aa). Lys274 participates in a covalent cross-link: Glycyl lysine isopeptide (Lys-Gly) (interchain with G-Cter in SUMO). An important for intracellular retention in recycling endosomes region spans residues 293-299; the sequence is IIEHDQL. The tract at residues 315-336 is disordered; that stretch reads QKQNEPFVATQSSACMDGPANH. Ser326 carries the post-translational modification Phosphoserine.

This sequence belongs to the two pore domain potassium channel (TC 1.A.1.8) family. In terms of assembly, homodimer; disulfide-linked. Heterodimer with KCNK2; disulfide-linked. In astrocytes, forms mostly heterodimeric potassium channels with KCNK2, with only a minor proportion of functional channels containing homodimeric KCNK1. Interacts with KCNK3 and KCNK9, forming functional heterodimeric channels. Interacts with GNG4. Identified in a complex with PSD and ARF6; interacts only with PSD that is bound to ARF6. Interacts with UBE2I. In terms of processing, sumoylation is controversial. Sumoylated by UBE2I. Not sumoylated when expressed in xenopus oocytes or mammalian cells. Sumoylation inactivates the channel, but does not interfere with expression at the cell membrane. Sumoylation of a single subunit is sufficient to silence the dimeric channel. Sumoylation of KCNK1 is sufficient to silence heterodimeric channels formed by KCNK1 and KCNK3 or KCNK9. Desumoylated by SENP1; this activates the channel. Desumoylated by SENP1; this strongly increases halothane-mediated activation of heterodimeric channels formed with KCNK9. SENP1 treatment has no effect.

It localises to the cell membrane. It is found in the recycling endosome. The protein resides in the synaptic cell membrane. Its subcellular location is the cytoplasmic vesicle. The protein localises to the perikaryon. It localises to the cell projection. It is found in the dendrite. The protein resides in the apical cell membrane. The enzyme catalyses K(+)(in) = K(+)(out). The catalysed reaction is NH4(+)(in) = NH4(+)(out). It carries out the reaction Na(+)(in) = Na(+)(out). It catalyses the reaction Rb(+)(in) = Rb(+)(out). The enzyme catalyses Cs(+)(in) = Cs(+)(out). The catalysed reaction is Li(+)(in) = Li(+)(out). It carries out the reaction L-glutamate(out) = L-glutamate(in). It catalyses the reaction chloride(in) = chloride(out). Ion channel that contributes to passive transmembrane potassium transport and to the regulation of the resting membrane potential in brain astrocytes, but also in kidney and in other tissues. Forms dimeric channels through which potassium ions pass in accordance with their electrochemical gradient. The channel is selective for K(+) ions at physiological potassium concentrations and at neutral pH, but becomes permeable to Na(+) at subphysiological K(+) levels, and upon acidification of the extracellular medium. The homodimer has very low potassium channel activity, when expressed in heterologous systems, and can function as weakly inward rectifying potassium channel. Channel activity is modulated by activation of serotonin receptors. Heterodimeric channels containing KCNK1 and KCNK2 have much higher activity, and may represent the predominant form in astrocytes. Heterodimeric channels containing KCNK1 and KCNK3 or KCNK9 have much higher activity. Heterodimeric channels formed by KCNK1 and KCNK9 may contribute to halothane-sensitive currents. Mediates outward rectifying potassium currents in dentate gyrus granule cells and contributes to the regulation of their resting membrane potential. Contributes to the regulation of action potential firing in dentate gyrus granule cells and down-regulates their intrinsic excitability. In astrocytes, the heterodimer formed by KCNK1 and KCNK2 is required for rapid glutamate release in response to activation of G-protein coupled receptors, such as F2R and CNR1. Required for normal ion and water transport in the kidney. Contributes to the regulation of the resting membrane potential of pancreatic beta cells. The low channel activity of homodimeric KCNK1 may be due to sumoylation. The low channel activity may be due to rapid internalization from the cell membrane and retention in recycling endosomes. Permeable to monovalent cations with ion selectivity for K(+) &gt; Rb(+) &gt;&gt; NH4(+) &gt;&gt; Cs(+) = Na(+) = Li(+). This is Potassium channel subfamily K member 1 from Pongo abelii (Sumatran orangutan).